A 400-amino-acid polypeptide reads, in one-letter code: Melanization protease 1 (400 aa).

A signal peptide spans 1 to 22 (MEPHFFFTVLWMLLMGTSSTYA). Residues 23–137 (QEIFGYCRTP…PNCGENFGDR (115 aa)) constitute a propeptide, activation peptide. The region spanning 28–91 (YCRTPDENSG…FCFTNVQICC (64 aa)) is the Clip domain. Intrachain disulfides connect Cys-29-Cys-90, Cys-39-Cys-70, and Cys-45-Cys-91. The disordered stretch occupies residues 98–120 (NQQPQWGNHPQPTQTTKPTKRSG). 3 cysteine pairs are disulfide-bonded: Cys-130–Cys-268, Cys-168–Cys-184, and Cys-210–Cys-220. Residues 138–399 (VVGGNETTKR…YLNWIENNVR (262 aa)) form the Peptidase S1 domain. An N-linked (GlcNAc...) asparagine glycan is attached at Asn-142. The active-site Charge relay system is His-183. Ca(2+) is bound by residues Glu-201, Asp-203, Thr-206, and Asp-209. Catalysis depends on Asp-248, which acts as the Charge relay system. Residue Asn-296 is glycosylated (N-linked (GlcNAc...) asparagine). Cystine bridges form between Cys-315–Cys-332 and Cys-342–Cys-375. Residue Ser-346 is the Charge relay system of the active site.

This sequence belongs to the peptidase S1 family. CLIP subfamily.

In terms of biological role, serine protease which plays an essential role in the melanization immune response by acting downstream of sp7 to activate prophenoloxidase (PPO1). May function in diverse Hayan-dependent PPO1-activating cascades that are negatively controlled by different serpin proteins; Spn27A in the hemolymph and Spn77BA in the trachea. Regulation of melanization and PPO1 activation appears to be largely independent of the Toll signaling pathway. The chain is Melanization protease 1 from Drosophila melanogaster (Fruit fly).